Consider the following 232-residue polypeptide: NAD(P)H-hydrate epimerase (232 aa).

The YjeF N-terminal domain occupies 9–219 (AISVDEELFN…KLQDKYAMEL (211 aa)). Residue 62–66 (NNGGD) coordinates (6S)-NADPHX. K(+) contacts are provided by N63 and D127. Residues 131 to 137 (GFSFKPP) and D160 each bind (6S)-NADPHX. S163 is a binding site for K(+).

This sequence belongs to the NnrE/AIBP family. K(+) is required as a cofactor.

The enzyme catalyses (6R)-NADHX = (6S)-NADHX. It catalyses the reaction (6R)-NADPHX = (6S)-NADPHX. Its function is as follows. Catalyzes the epimerization of the S- and R-forms of NAD(P)HX, a damaged form of NAD(P)H that is a result of enzymatic or heat-dependent hydration. This is a prerequisite for the S-specific NAD(P)H-hydrate dehydratase to allow the repair of both epimers of NAD(P)HX. This chain is NAD(P)H-hydrate epimerase, found in Aedes aegypti (Yellowfever mosquito).